Reading from the N-terminus, the 156-residue chain is ATP synthase subunit b (156 aa).

Residues 11-31 (AIAFILFVWFCMKYVWPPLMA) traverse the membrane as a helical segment.

It belongs to the ATPase B chain family. F-type ATPases have 2 components, F(1) - the catalytic core - and F(0) - the membrane proton channel. F(1) has five subunits: alpha(3), beta(3), gamma(1), delta(1), epsilon(1). F(0) has three main subunits: a(1), b(2) and c(10-14). The alpha and beta chains form an alternating ring which encloses part of the gamma chain. F(1) is attached to F(0) by a central stalk formed by the gamma and epsilon chains, while a peripheral stalk is formed by the delta and b chains.

The protein resides in the cell inner membrane. F(1)F(0) ATP synthase produces ATP from ADP in the presence of a proton or sodium gradient. F-type ATPases consist of two structural domains, F(1) containing the extramembraneous catalytic core and F(0) containing the membrane proton channel, linked together by a central stalk and a peripheral stalk. During catalysis, ATP synthesis in the catalytic domain of F(1) is coupled via a rotary mechanism of the central stalk subunits to proton translocation. Functionally, component of the F(0) channel, it forms part of the peripheral stalk, linking F(1) to F(0). This chain is ATP synthase subunit b, found in Enterobacter sp. (strain 638).